A 458-amino-acid polypeptide reads, in one-letter code: MRPLHPIDFIFLSLEKRQQPMHVGGLFLFQIPDNAPDTFIQDLVNDIRISKSIPVPPFNNKLNGLFWDEDEEFDLDHHFRHIALPHPGRIRELLIYISQEHSTLLDRAKPLWTCNIIEGIEGNRFAMYFKIHHAMVDGVAGMRLIEKSLSHDVTEKSIVPPWCVEGKRAKRLREPKTGKIKKIMSGIKSQLQATPTVIQELSQTVFKDIGRNPDHVSSFQAPCSILNQRVSSSRRFAAQSFDLDRFRNIAKSLNVTINDVVLAVCSGALRAYLMSHNSLPSKPLIAMVPASIRNDDSDVSNRITMILANLATHKDDPLQRLEIIRRSVQNSKQRFKRMTSDQILNYSAVVYGPAGLNIISGMMPKRQAFNLVISNVPGPREPLYWNGAKLDALYPASIVLDGQALNITMTSYLDKLEVGLIACRNALPRMQNLLTHLEEEIQLFEGVIAKQEDIKTAN.

The active-site Proton acceptor is the His133.

It belongs to the long-chain O-acyltransferase family.

The catalysed reaction is a long chain fatty alcohol + a fatty acyl-CoA = a wax ester + CoA. It carries out the reaction an acyl-CoA + a 1,2-diacyl-sn-glycerol = a triacyl-sn-glycerol + CoA. It participates in glycerolipid metabolism; triacylglycerol biosynthesis. Functionally, bifunctional wax ester synthase/diacylglycerol acyltransferase (WS and DGAT). Catalyzes the terminal and only committed step in triacylglycerol synthesis by using diacylglycerol and fatty acyl CoA as substrates. Required for storage lipid synthesis. WS uses C(12)-CoA to C(18)-CoA substrates whereas DGAT prefers C(20)-CoA. Upon expression in E.coli and Pseudomonas citronellolis (DSM 50332) both WS and DGAT activities increase. This is O-acyltransferase WSD (wax-dgaT) from Acinetobacter baylyi (strain ATCC 33305 / BD413 / ADP1).